Reading from the N-terminus, the 378-residue chain is Mannitol-1-phosphate 5-dehydrogenase (378 aa).

4 to 15 (SVHFGAGNIGRG) lines the NAD(+) pocket.

Belongs to the mannitol dehydrogenase family.

The catalysed reaction is D-mannitol 1-phosphate + NAD(+) = beta-D-fructose 6-phosphate + NADH + H(+). The sequence is that of Mannitol-1-phosphate 5-dehydrogenase from Streptococcus pneumoniae (strain CGSP14).